Reading from the N-terminus, the 415-residue chain is Multidrug resistance protein MdtA (415 aa).

The signal sequence occupies residues M1–A21. Disordered stretches follow at residues S32–A56 and E392–S415. Positions S399 to S415 are enriched in basic and acidic residues.

The protein belongs to the membrane fusion protein (MFP) (TC 8.A.1) family. In terms of assembly, part of a tripartite efflux system composed of MdtA, MdtB and MdtC.

It is found in the cell inner membrane. Its function is as follows. The MdtABC tripartite complex confers resistance against novobiocin and deoxycholate. This is Multidrug resistance protein MdtA from Escherichia coli O7:K1 (strain IAI39 / ExPEC).